A 723-amino-acid chain; its full sequence is Catalase-peroxidase (723 aa).

Positions 96-225 (WHAAGSYRVA…LAAVMMGLIY (130 aa)) form a cross-link, tryptophyl-tyrosyl-methioninium (Trp-Tyr) (with M-251). The active-site Proton acceptor is His-97. Positions 225–251 (YVNPEGVDGNPDPLKTAEDVRVTFARM) form a cross-link, tryptophyl-tyrosyl-methioninium (Tyr-Met) (with W-96). Residue His-266 coordinates heme b.

It belongs to the peroxidase family. Peroxidase/catalase subfamily. In terms of assembly, homodimer or homotetramer. Heme b is required as a cofactor. In terms of processing, formation of the three residue Trp-Tyr-Met cross-link is important for the catalase, but not the peroxidase activity of the enzyme.

The enzyme catalyses H2O2 + AH2 = A + 2 H2O. It carries out the reaction 2 H2O2 = O2 + 2 H2O. Bifunctional enzyme with both catalase and broad-spectrum peroxidase activity. In Alkalilimnicola ehrlichii (strain ATCC BAA-1101 / DSM 17681 / MLHE-1), this protein is Catalase-peroxidase.